Consider the following 316-residue polypeptide: Glutathione synthetase (316 aa).

Residues 125–311 (KLFTAWFPEL…ITGMLMNAIE (187 aa)) form the ATP-grasp domain. 151-207 (HQKHGDVIFKPLDGMGGASIFRLKKDDPNVGVIIETLTEHGNRFCMAQNFLPAIKEG) contributes to the ATP binding site. The Mg(2+) site is built by Glu-281 and Asn-283.

This sequence belongs to the prokaryotic GSH synthase family. Requires Mg(2+) as cofactor. Mn(2+) is required as a cofactor.

The catalysed reaction is gamma-L-glutamyl-L-cysteine + glycine + ATP = glutathione + ADP + phosphate + H(+). It participates in sulfur metabolism; glutathione biosynthesis; glutathione from L-cysteine and L-glutamate: step 2/2. The protein is Glutathione synthetase of Photorhabdus laumondii subsp. laumondii (strain DSM 15139 / CIP 105565 / TT01) (Photorhabdus luminescens subsp. laumondii).